The sequence spans 246 residues: YjeF N-terminal domain-containing 3 (246 aa).

The region spanning 24–234 (VATVETELLR…DIQKKYELNL (211 aa)) is the YjeF N-terminal domain.

Interacts with apoa1a. Binds to high-density lipoprotein.

Accelerates cholesterol efflux from endothelial cells to high-density lipoprotein (HDL) and thereby regulates angiogenesis. Orchestrates hematopoietic stem and progenitor cell emergence from the hemogenic endothelium, a type of specialized endothelium manifesting hematopoietic potential. YJEFN3-mediated cholesterol efflux activates endothelial SREBF2, the master transcription factor for cholesterol biosynthesis, which in turn transactivates NOTCH and promotes hematopoietic stem and progenitor cell emergence. The sequence is that of YjeF N-terminal domain-containing 3 from Danio rerio (Zebrafish).